A 176-amino-acid chain; its full sequence is Disulfide bond formation protein B (176 aa).

Residues 1-11 (MLQLTTYRNLQ) lie on the Cytoplasmic side of the membrane. The helical transmembrane segment at 12–28 (VFLVIMTAIGMSFALFF) threads the bilayer. Topologically, residues 29–46 (LQRYMGFSPCPLCIFQRI) are periplasmic. C38 and C41 form a disulfide bridge. The helical transmembrane segment at 47 to 63 (GLMIMGGFALIAALFHP) threads the bilayer. Over 64 to 70 (KSMVIRL) the chain is Cytoplasmic. A helical membrane pass occupies residues 71-88 (LLWLGSLAGIGWAAIVAG). Topologically, residues 89-145 (RHVWLQHLPADQVPSCGPGLDYWLDTLPMQQVLKEVFAGSGECASIEWTFLGLSIPE) are periplasmic. A disulfide bond links C104 and C131. A helical membrane pass occupies residues 146–164 (QSLILFSILILTHLLILWR). At 165–176 (IVRPSTPKPLAR) the chain is on the cytoplasmic side.

This sequence belongs to the DsbB family.

Its subcellular location is the cell inner membrane. Required for disulfide bond formation in some periplasmic proteins. Acts by oxidizing the DsbA protein. This is Disulfide bond formation protein B from Psychrobacter arcticus (strain DSM 17307 / VKM B-2377 / 273-4).